We begin with the raw amino-acid sequence, 412 residues long: Probable serine/threonine-protein kinase PBL4 (412 aa).

Gly-2 is lipidated: N-myristoyl glycine. Cys-4 carries S-palmitoyl cysteine lipidation. Residues 14 to 40 (RESPYRGSSRISAKRSQSSRLSSLTIQ) form a disordered region. A compositionally biased stretch (low complexity) spans 21–40 (SSRISAKRSQSSRLSSLTIQ). Thr-72 is subject to Phosphothreonine. One can recognise a Protein kinase domain in the interval 83-369 (FRPDSVIGEG…STLEELEMTL (287 aa)). ATP is bound by residues 89-97 (IGEGGFGYV) and Lys-121. Phosphotyrosine is present on Tyr-167. Asp-215 serves as the catalytic Proton acceptor. Phosphoserine occurs at positions 219 and 249. Thr-250 and Thr-255 each carry phosphothreonine. Residue Tyr-263 is modified to Phosphotyrosine.

The protein belongs to the protein kinase superfamily. Ser/Thr protein kinase family.

It localises to the cell membrane. It catalyses the reaction L-seryl-[protein] + ATP = O-phospho-L-seryl-[protein] + ADP + H(+). It carries out the reaction L-threonyl-[protein] + ATP = O-phospho-L-threonyl-[protein] + ADP + H(+). Its function is as follows. May be involved in plant defense signaling. The sequence is that of Probable serine/threonine-protein kinase PBL4 from Arabidopsis thaliana (Mouse-ear cress).